Here is a 115-residue protein sequence, read N- to C-terminus: Large ribosomal subunit protein uL18 (115 aa).

It belongs to the universal ribosomal protein uL18 family. As to quaternary structure, part of the 50S ribosomal subunit; part of the 5S rRNA/L5/L18/L25 subcomplex. Contacts the 5S and 23S rRNAs.

This is one of the proteins that bind and probably mediate the attachment of the 5S RNA into the large ribosomal subunit, where it forms part of the central protuberance. The chain is Large ribosomal subunit protein uL18 from Vesicomyosocius okutanii subsp. Calyptogena okutanii (strain HA).